The chain runs to 70 residues: uncharacterized protein (70 aa).

This is an uncharacterized protein from Vaccinia virus (strain Copenhagen) (VACV).